A 165-amino-acid polypeptide reads, in one-letter code: Phosphopantetheine adenylyltransferase (165 aa).

Position 10 (Ser-10) interacts with substrate. Residues 10–11 and His-18 contribute to the ATP site; that span reads SF. The substrate site is built by Lys-42, Leu-74, and Arg-88. ATP contacts are provided by residues 89-91, Glu-99, and 124-130; these read GLR and YSFISSS.

The protein belongs to the bacterial CoaD family. Homohexamer. Mg(2+) serves as cofactor.

The protein localises to the cytoplasm. It carries out the reaction (R)-4'-phosphopantetheine + ATP + H(+) = 3'-dephospho-CoA + diphosphate. It functions in the pathway cofactor biosynthesis; coenzyme A biosynthesis; CoA from (R)-pantothenate: step 4/5. In terms of biological role, reversibly transfers an adenylyl group from ATP to 4'-phosphopantetheine, yielding dephospho-CoA (dPCoA) and pyrophosphate. The protein is Phosphopantetheine adenylyltransferase of Macrococcus caseolyticus (strain JCSC5402) (Macrococcoides caseolyticum).